We begin with the raw amino-acid sequence, 534 residues long: MKYIVVTGGVMSGLGKGITIASIGRNLKNKGYKVTAIKIDPYINIDAGTMSPYQHGEVFVLRDGGEVDLDLGNYERFLDTELTRDHNLTTGKIYQEVIAKERRGDYLGKTVQIIPHITNEIKSRIRKVAARSGADVCLVEIGGTVGDIESMPFLEAVRQMHREEPSENIVFIHVTLVMEDLQGEQKTKPSQHSVKELRALGLSPEVIVTRSKTPLQESAKEKIALFCDVPQELVISAHDAADIYEVPLEIEEQGLTTRLMKHLKLESSVEDNGWREMVSRMKSTTEEVKLAIVGKYTNLEDSYLSILEAVKHGGIDNGCKVEVNMVEAETLEEDPAEIEKLRQFDGILIPGGFGGRGTEGKMLAIKFARENDVPFLGICLGMQLAVIEFARNVVNLENANSTEFDEDTPYPVIDILPEQTGVADMGGTMRLGDYDAILKDGSLATKLYGTNYIVERHRHRYEVNPEFVDRLESFGIVFSGKNKNRMEIAEIPDKRFFFASQFHPEFRSRPGRPSPPFKGLVRAMCKYNKEKEGQ.

The segment at 1–265 (MKYIVVTGGV…TTRLMKHLKL (265 aa)) is amidoligase domain. S12 lines the CTP pocket. S12 contacts UTP. 13-18 (GLGKGI) contacts ATP. Y53 provides a ligand contact to L-glutamine. Residue D70 coordinates ATP. Positions 70 and 140 each coordinate Mg(2+). Residues 147–149 (DIE), 186–191 (KTKPSQ), and K222 each bind CTP. UTP contacts are provided by residues 186-191 (KTKPSQ) and K222. The Glutamine amidotransferase type-1 domain occupies 289-530 (KLAIVGKYTN…VRAMCKYNKE (242 aa)). Residue G352 coordinates L-glutamine. C379 functions as the Nucleophile; for glutamine hydrolysis in the catalytic mechanism. Residues 380 to 383 (LGMQ), E403, and R460 contribute to the L-glutamine site. Catalysis depends on residues H503 and E505.

The protein belongs to the CTP synthase family. Homotetramer.

The catalysed reaction is UTP + L-glutamine + ATP + H2O = CTP + L-glutamate + ADP + phosphate + 2 H(+). The enzyme catalyses L-glutamine + H2O = L-glutamate + NH4(+). It carries out the reaction UTP + NH4(+) + ATP = CTP + ADP + phosphate + 2 H(+). The protein operates within pyrimidine metabolism; CTP biosynthesis via de novo pathway; CTP from UDP: step 2/2. With respect to regulation, allosterically activated by GTP, when glutamine is the substrate; GTP has no effect on the reaction when ammonia is the substrate. The allosteric effector GTP functions by stabilizing the protein conformation that binds the tetrahedral intermediate(s) formed during glutamine hydrolysis. Inhibited by the product CTP, via allosteric rather than competitive inhibition. Catalyzes the ATP-dependent amination of UTP to CTP with either L-glutamine or ammonia as the source of nitrogen. Regulates intracellular CTP levels through interactions with the four ribonucleotide triphosphates. The polypeptide is CTP synthase (Methanosarcina acetivorans (strain ATCC 35395 / DSM 2834 / JCM 12185 / C2A)).